The sequence spans 278 residues: DNA adenine methylase (278 aa).

Residues Trp10, Lys14, Asp54, and Asp181 each coordinate S-adenosyl-L-methionine.

The protein belongs to the N(4)/N(6)-methyltransferase family.

It catalyses the reaction a 2'-deoxyadenosine in DNA + S-adenosyl-L-methionine = an N(6)-methyl-2'-deoxyadenosine in DNA + S-adenosyl-L-homocysteine + H(+). In terms of biological role, an alpha subtype methylase, recognizes the double-stranded sequence 5'-GATC-3' and methylates A-2. May be involved in methyl-directed DNA mismatch repair, initiation of chromosome replication and gene expression. The chain is DNA adenine methylase (dam) from Salmonella typhimurium.